Here is a 943-residue protein sequence, read N- to C-terminus: Nuclear receptor coactivator 7 (943 aa).

Methionine 1 carries the N-acetylmethionine modification. Over residues 1-15 (MDTKEEKKEQKERKQ) the composition is skewed to basic and acidic residues. Residues 1-32 (MDTKEEKKEQKERKQSYFARLKKKKQAKQNAE) adopt a coiled-coil conformation. The tract at residues 1 to 83 (MDTKEEKKEQ…RKSNQLKEIR (83 aa)) is disordered. Serine 92 carries the post-translational modification Phosphoserine. The 44-residue stretch at 117–160 (MEYTAGSQDTLNSVALKFNVTPNKLVELNKLFTHTIVPGQVLFV) folds into the LysM domain. A Phosphothreonine modification is found at threonine 137. Residues 169-189 (TIQLSSSTPGATVSPSSSDAE) are disordered. Positions 177-187 (PGATVSPSSSD) are enriched in polar residues. Serine 182, serine 186, serine 211, serine 212, and serine 214 each carry phosphoserine. Positions 334 to 369 (EKRQQNGERTLALDAKSVRSPEESTERTCTRIEPPD) are disordered. Residues 349–369 (KSVRSPEESTERTCTRIEPPD) show a composition bias toward basic and acidic residues. Residues serine 442, serine 498, and serine 500 each carry the phosphoserine modification. Residues 486–499 (EKQDEAPEVDKHSG) are compositionally biased toward basic and acidic residues. Disordered stretches follow at residues 486–507 (EKQD…LGES) and 543–576 (LSDR…NKEP). Residues 782–943 (ALLENMHIEQ…VQDLEVWTFE (162 aa)) enclose the TLDc domain.

It belongs to the OXR1 family. In terms of assembly, interacts with ESR1, ESR2A, ESR2B, THRB, PPARG and RARA in a ligand-inducible manner. Interacts with the heterodimer AHR-ARNT. As to expression, highly expressed in brain and kidney. Weakly expressed in mammary gland, lung and testis. In brain, expression is found in neurons of cerebral cortex, thalamus, hypothalamus, hippocampus, cerebellum, striatum and choroid plexus.

The protein localises to the nucleus. In terms of biological role, enhances the transcriptional activities of several nuclear receptors. Involved in the coactivation of different nuclear receptors, such as ESR1, THRB, PPARG and RARA. This is Nuclear receptor coactivator 7 (Ncoa7) from Mus musculus (Mouse).